Reading from the N-terminus, the 122-residue chain is Large ribosomal subunit protein uL14 (122 aa).

It belongs to the universal ribosomal protein uL14 family. As to quaternary structure, part of the 50S ribosomal subunit. Forms a cluster with proteins L3 and L19. In the 70S ribosome, L14 and L19 interact and together make contacts with the 16S rRNA in bridges B5 and B8.

Its function is as follows. Binds to 23S rRNA. Forms part of two intersubunit bridges in the 70S ribosome. This chain is Large ribosomal subunit protein uL14, found in Exiguobacterium sp. (strain ATCC BAA-1283 / AT1b).